A 527-amino-acid chain; its full sequence is Putative zinc finger CCCH domain-containing protein 64 (527 aa).

The interval G103–V127 is disordered. A C3H1-type zinc finger spans residues R213–D241.

The sequence is that of Putative zinc finger CCCH domain-containing protein 64 from Oryza sativa subsp. japonica (Rice).